Consider the following 433-residue polypeptide: Serine carboxypeptidase-like 8 (433 aa).

Residues Met-1–Ser-19 form the signal peptide. Intrachain disulfides connect Cys-78-Cys-323, Cys-241-Cys-255, and Cys-279-Cys-289. N-linked (GlcNAc...) asparagine glycosylation occurs at Asn-99. Residue Ser-173 is part of the active site. Asn-283, Asn-324, and Asn-342 each carry an N-linked (GlcNAc...) asparagine glycan. Active-site residues include Asp-358 and His-411. Asn-418 is a glycosylation site (N-linked (GlcNAc...) asparagine).

Belongs to the peptidase S10 family. Post-translationally, N-glycosylated. In terms of tissue distribution, highly expressed in seedlings. Expressed in leaves, stems, flowers and siliques, and at low levels in roots.

Its subcellular location is the vacuole. The enzyme catalyses 1-O-(trans-sinapoyl)-beta-D-glucose + (S)-malate = sinapoyl (S)-malate + D-glucose. The catalysed reaction is 2 1-O-(trans-sinapoyl)-beta-D-glucose = 1,2-di-O-sinapoyl beta-D-glucose + D-glucose. 95% inhibition by diisopropyl fluorophosphate (DFP) and 30% by phenylmethylsulfonyl fluoride (PMSF). Functionally, involved in plants secondary metabolism. Functions as acyltransferase to form the sinapate ester sinapoylmalate. Also capable of catalyzing the formation of 1,2-bis-O-sinapoyl beta-D-glucoside. The polypeptide is Serine carboxypeptidase-like 8 (Arabidopsis thaliana (Mouse-ear cress)).